Here is a 121-residue protein sequence, read N- to C-terminus: Spindle and kinetochore-associated protein 2 (121 aa).

Residue Ser-101 is modified to Phosphoserine.

This sequence belongs to the SKA2 family. As to quaternary structure, component of the SKA1 complex, composed of SKA1, SKA2 and SKA3. Forms a heterodimer with SKA1; the heterodimer interacting with SKA3. The core SKA1 complex is composed of 2 SKA1-SKA2 heterodimers, each heterodimer interacting with a molecule of the SKA3 homodimer. The core SKA1 complex associates with microtubules and forms oligomeric assemblies. Interacts directly with SKA1. Binds directly to microtubules; but with a much lower affinity than SKA1. May interact with NR3C1; the relevance of such interaction remains unclear in vivo.

The protein localises to the cytoplasm. Its subcellular location is the cytoskeleton. The protein resides in the spindle. It localises to the chromosome. It is found in the centromere. The protein localises to the kinetochore. Its function is as follows. Component of the SKA1 complex, a microtubule-binding subcomplex of the outer kinetochore that is essential for proper chromosome segregation. Required for timely anaphase onset during mitosis, when chromosomes undergo bipolar attachment on spindle microtubules leading to silencing of the spindle checkpoint. The SKA1 complex is a direct component of the kinetochore-microtubule interface and directly associates with microtubules as oligomeric assemblies. The complex facilitates the processive movement of microspheres along a microtubule in a depolymerization-coupled manner. In the complex, it is required for SKA1 localization. Affinity for microtubules is synergistically enhanced in the presence of the ndc-80 complex and may allow the ndc-80 complex to track depolymerizing microtubules. The chain is Spindle and kinetochore-associated protein 2 (SKA2) from Homo sapiens (Human).